Consider the following 417-residue polypeptide: Phosphoglycerate kinase 1 (417 aa).

Residue Ser-2 is modified to N-acetylserine. A phosphoserine mark is found at Ser-2 and Ser-4. An N6-succinyllysine modification is found at Lys-6. Residue Lys-11 is modified to N6-acetyllysine. 10 residues coordinate (2R)-3-phosphoglycerate: Val-23, Asp-24, Phe-25, Asn-26, Gln-38, Arg-39, Ser-62, His-63, Gly-65, and Arg-66. Residues 38 to 43 form a mitochondrial targeting region exposed following cis-trans isomerization by PIN1 and recognized by the TOM complex for mitochondrial translocation of the protein region; that stretch reads QRIKAA. Lys-75 carries the N6-acetyllysine modification. The residue at position 76 (Tyr-76) is a Phosphotyrosine. An N6-acetyllysine mark is found at Lys-86 and Lys-91. N6-(2-hydroxyisobutyryl)lysine; alternate is present on Lys-97. At Lys-97 the chain carries N6-acetyllysine; alternate. (2R)-3-phosphoglycerate-binding residues include Leu-122 and Arg-123. N6-acetyllysine; alternate is present on Lys-131. Lys-131 is subject to N6-malonyllysine; alternate. At Lys-146 the chain carries N6-acetyllysine. Residues His-170 and Arg-171 each coordinate (2R)-3-phosphoglycerate. An N6-succinyllysine modification is found at Lys-191. Tyr-196 is modified (phosphotyrosine). At Lys-199 the chain carries N6-acetyllysine. Ser-203 bears the Phosphoserine mark. Gly-214 provides a ligand contact to ADP. Position 214 (Gly-214) interacts with CDP. Residues Ala-215 and Lys-216 each coordinate AMP. Ala-215 provides a ligand contact to ATP. Ala-215 provides a ligand contact to Mg(2+). Position 216 is an N6-(2-hydroxyisobutyryl)lysine (Lys-216). The Mg(2+) site is built by Ala-218 and Asp-219. Asp-219 provides a ligand contact to CDP. An AMP-binding site is contributed by Lys-220. Position 220 (Lys-220) interacts with ATP. Lys-220 is modified (N6-(2-hydroxyisobutyryl)lysine). Residue Gly-238 coordinates ADP. A CDP-binding site is contributed by Gly-238. Gly-239 provides a ligand contact to AMP. Gly-239 contacts ATP. N6-acetyllysine is present on residues Lys-267 and Lys-291. Gly-313 lines the AMP pocket. Gly-313 is an ATP binding site. Lys-323 is modified (N6-(2-hydroxyisobutyryl)lysine). The CDP site is built by Gly-338, Val-340, and Phe-343. Residue Phe-343 coordinates ADP. AMP is bound at residue Glu-344. The ATP site is built by Glu-344, Asp-375, and Thr-376. Asp-375 contributes to the Mg(2+) binding site.

The protein belongs to the phosphoglycerate kinase family. Monomer. Interacts with kinase MAPK1/ERK2; the interaction is direct, occurs under hypoxic conditions, and promotes its interaction with PIN1. Interacts with peptidyl-prolyl cis-trans isomerase PIN1; the interaction is direct, occurs under hypoxic conditions, and targets the protein to the mitochondrion by promoting interactions with the TOM complex. Interacts with mitochondrial circRNA mcPGK1 (via its 2nd stem-loop); the interaction is direct and targets the protein to the mitochondrion by promoting interactions with the TOM complex. Interacts with pyruvate dehydrogenase kinase PDK1; the interaction is direct, occurs under hypoxic conditions and leads to PDK1-mediated inhibition of pyruvate dehydrogenase complex activity. Mg(2+) serves as cofactor. Post-translationally, phosphorylated at Ser-203 by MAPK1/ERK2 under hypoxic conditions, which promotes its mitochondrial targeting.

The protein resides in the cytoplasm. The protein localises to the cytosol. Its subcellular location is the mitochondrion matrix. The catalysed reaction is (2R)-3-phosphoglycerate + ATP = (2R)-3-phospho-glyceroyl phosphate + ADP. It catalyses the reaction L-seryl-[protein] + ATP = O-phospho-L-seryl-[protein] + ADP + H(+). Its pathway is carbohydrate degradation; glycolysis; pyruvate from D-glyceraldehyde 3-phosphate: step 2/5. In terms of biological role, catalyzes one of the two ATP producing reactions in the glycolytic pathway via the reversible conversion of 1,3-diphosphoglycerate to 3-phosphoglycerate. Both L- and D- forms of purine and pyrimidine nucleotides can be used as substrates, but the activity is much lower on pyrimidines. In addition to its role as a glycolytic enzyme, it seems that PGK-1 acts as a polymerase alpha cofactor protein (primer recognition protein). Acts as a protein kinase when localized to the mitochondrion where it phosphorylates pyruvate dehydrogenase kinase PDK1 to inhibit pyruvate dehydrogenase complex activity and suppress the formation of acetyl-coenzyme A from pyruvate, and consequently inhibit oxidative phosphorylation and promote glycolysis. May play a role in sperm motility. The chain is Phosphoglycerate kinase 1 (PGK1) from Notamacropus eugenii (Tammar wallaby).